The primary structure comprises 550 residues: MLIERTCAILGKMLEYCASLVALHSCVIMTTNTHITDDRILILDFGSQYSQLIARRVREAGVYSEMYAFDMSEEDIRAFNPNGIILSGGPESVHEEGSPRAPQVVFELGVPVLGICYGFQTMSEQLGGKVEPGTVHEFGYAEVDIQQRDQLVGNLQDRENQLHVWMSHGDKVSRLPEGFSTTASTPSCPFAAASDEARRFYGVQFHPEVTHTAKGAELLANFVHKICGCGGLWTPEHIIDLRVEQLRAQIGDEKVLLGLSGGVDSSVVAALLHKAIGDQLTCVFVDNGLLRLNEGDQVMQMFADNMGIRVIRADAEERFLTALAGEVDPEKKRKIIGREFIEVFAEEARKLDGVKFLAQGTIYPDVIESAASKQGKAHVIKSHHNVGGLPDDLEFELVEPLRDLFKDEVRKLGTTLGLPHSMIYRHPFPGPGLGVRILGEVKKEYADILRLADDIFMQELRASGWYDKTAQAFAVFQPVKSVGVVGDGRRYAWVIALRAVETVDFMTARFAHLPYELVDKISTRIMNEIKDVSRVVYDVSSKPPATIEWE.

A Glutamine amidotransferase type-1 domain is found at 39–232; it reads RILILDFGSQ…VHKICGCGGL (194 aa). Catalysis depends on C116, which acts as the Nucleophile. Residues H206 and E208 contribute to the active site. The GMPS ATP-PPase domain maps to 233 to 425; sequence WTPEHIIDLR…LGLPHSMIYR (193 aa). An ATP-binding site is contributed by 260-266; the sequence is SGGVDSS.

Homodimer.

It catalyses the reaction XMP + L-glutamine + ATP + H2O = GMP + L-glutamate + AMP + diphosphate + 2 H(+). Its pathway is purine metabolism; GMP biosynthesis; GMP from XMP (L-Gln route): step 1/1. In terms of biological role, catalyzes the synthesis of GMP from XMP. This is GMP synthase [glutamine-hydrolyzing] from Acinetobacter baylyi (strain ATCC 33305 / BD413 / ADP1).